The chain runs to 261 residues: tRNA pseudouridine synthase A (261 aa).

Asp51 serves as the catalytic Nucleophile. Tyr109 serves as a coordination point for substrate.

Belongs to the tRNA pseudouridine synthase TruA family. In terms of assembly, homodimer.

The enzyme catalyses uridine(38/39/40) in tRNA = pseudouridine(38/39/40) in tRNA. Its function is as follows. Formation of pseudouridine at positions 38, 39 and 40 in the anticodon stem and loop of transfer RNAs. This chain is tRNA pseudouridine synthase A, found in Shewanella halifaxensis (strain HAW-EB4).